The following is a 112-amino-acid chain: Lutropin subunit beta (112 aa).

6 disulfides stabilise this stretch: Cys4–Cys52, Cys18–Cys67, Cys21–Cys105, Cys29–Cys83, Cys33–Cys85, and Cys88–Cys95. Asn8 is a glycosylation site (N-linked (GlcNAc...) asparagine).

It belongs to the glycoprotein hormones subunit beta family. Heterodimer of a common alpha chain and a unique beta chain which confers biological specificity to thyrotropin, lutropin, follitropin and gonadotropin.

It localises to the secreted. The chain is Lutropin subunit beta (lhb) from Aquarana catesbeiana (American bullfrog).